Consider the following 136-residue polypeptide: Histone H3.2 (136 aa).

The interval 1–45 (MARTKQTARKSTGGKAPRKQLATKAARKSAPATGGVKKPHRYRPG) is disordered. Arg3 is modified (asymmetric dimethylarginine; by PRMT6; alternate). The residue at position 3 (Arg3) is a Citrulline; alternate. At Thr4 the chain carries Phosphothreonine; by HASPIN and VRK1. Lys5 is subject to Allysine; alternate. N6,N6,N6-trimethyllysine; alternate is present on Lys5. An N6,N6-dimethyllysine; alternate modification is found at Lys5. Residue Lys5 is modified to N6-(2-hydroxyisobutyryl)lysine; alternate. At Lys5 the chain carries N6-(beta-hydroxybutyryl)lysine; alternate. Position 5 is an N6-acetyllysine; alternate (Lys5). An N6-crotonyllysine; alternate modification is found at Lys5. N6-methyllysine; alternate is present on Lys5. Gln6 is subject to 5-glutamyl dopamine; alternate. Gln6 is modified (5-glutamyl serotonin; alternate). The residue at position 7 (Thr7) is a Phosphothreonine; by PKC. Arg9 is modified (citrulline; alternate). The residue at position 9 (Arg9) is a Symmetric dimethylarginine; by PRMT5; alternate. Lys10 is modified (N6,N6,N6-trimethyllysine; alternate). Lys10 carries the post-translational modification N6,N6-dimethyllysine; alternate. Residue Lys10 is modified to N6-(2-hydroxyisobutyryl)lysine; alternate. Lys10 is subject to N6-(beta-hydroxybutyryl)lysine; alternate. Lys10 carries the N6-acetyllysine; alternate modification. Position 10 is an N6-crotonyllysine; alternate (Lys10). Lys10 carries the post-translational modification N6-methyllysine; alternate. Lys10 is modified (N6-lactoyllysine; alternate). The residue at position 11 (Ser11) is an ADP-ribosylserine; alternate. Phosphoserine; alternate; by AURKB, AURKC, RPS6KA3, RPS6KA4 and RPS6KA5 is present on Ser11. Thr12 bears the Phosphothreonine; by PKC mark. Lys15 carries the post-translational modification N6-(2-hydroxyisobutyryl)lysine; alternate. Position 15 is an N6-(beta-hydroxybutyryl)lysine; alternate (Lys15). Lys15 is subject to N6-acetyllysine; alternate. Lys15 carries the post-translational modification N6-lactoyllysine; alternate. Lys15 is subject to N6-glutaryllysine; alternate. The residue at position 15 (Lys15) is an N6-succinyllysine; alternate. The residue at position 18 (Arg18) is a Citrulline; alternate. Arg18 is subject to Asymmetric dimethylarginine; by CARM1; alternate. Lys19 and Lys24 each carry N6-(2-hydroxyisobutyryl)lysine; alternate. An N6-(beta-hydroxybutyryl)lysine; alternate mark is found at Lys19 and Lys24. N6-acetyllysine; alternate is present on residues Lys19 and Lys24. N6-crotonyllysine; alternate occurs at positions 19 and 24. 2 positions are modified to N6-methyllysine; alternate: Lys19 and Lys24. Residues Lys19 and Lys24 each carry the N6-lactoyllysine; alternate modification. 2 positions are modified to N6-glutaryllysine; alternate: Lys19 and Lys24. An N6-butyryllysine; alternate mark is found at Lys19 and Lys24. Lys19 is lipidated: N6-decanoyllysine. Position 27 is a citrulline (Arg27). At Lys28 the chain carries N6,N6,N6-trimethyllysine; alternate. Lys28 carries the N6,N6-dimethyllysine; alternate modification. N6-(2-hydroxyisobutyryl)lysine; alternate is present on Lys28. An N6-acetyllysine; alternate modification is found at Lys28. At Lys28 the chain carries N6-crotonyllysine; alternate. Lys28 is subject to N6-methyllysine; alternate. Lys28 carries the post-translational modification N6-lactoyllysine; alternate. An N6-glutaryllysine; alternate modification is found at Lys28. An ADP-ribosylserine; alternate modification is found at Ser29. Phosphoserine; alternate; by AURKB, AURKC and RPS6KA5 is present on Ser29. Position 37 is an N6,N6,N6-trimethyllysine; alternate (Lys37). At Lys37 the chain carries N6,N6-dimethyllysine; alternate. N6-(2-hydroxyisobutyryl)lysine; alternate is present on Lys37. An N6-acetyllysine; alternate modification is found at Lys37. Lys37 is subject to N6-methyllysine; alternate. Lys38 is modified (N6-methyllysine). Tyr42 carries the post-translational modification Phosphotyrosine. Residue Lys57 is modified to N6,N6,N6-trimethyllysine; alternate. Lys57 carries the post-translational modification N6-(2-hydroxyisobutyryl)lysine; alternate. An N6-(beta-hydroxybutyryl)lysine; alternate modification is found at Lys57. The residue at position 57 (Lys57) is an N6-acetyllysine; alternate. Lys57 is modified (N6-crotonyllysine; alternate). Lys57 carries the post-translational modification N6-lactoyllysine; alternate. Lys57 is modified (N6-glutaryllysine; alternate). N6-succinyllysine; alternate is present on Lys57. At Lys57 the chain carries N6-methyllysine; by EHMT2; alternate. Phosphoserine is present on Ser58. An N6-(2-hydroxyisobutyryl)lysine; alternate mark is found at Lys65 and Lys80. 2 positions are modified to N6-methyllysine; alternate: Lys65 and Lys80. Lys80 carries the N6,N6,N6-trimethyllysine; alternate modification. N6,N6-dimethyllysine; alternate is present on Lys80. Residue Lys80 is modified to N6-acetyllysine; alternate. Residue Lys80 is modified to N6-lactoyllysine; alternate. Lys80 carries the N6-glutaryllysine; alternate modification. The residue at position 80 (Lys80) is an N6-succinyllysine; alternate. Thr81 is modified (phosphothreonine). A Phosphoserine modification is found at Ser87. Residue Thr108 is modified to Phosphothreonine. Cys111 carries S-palmitoyl cysteine lipidation. 2 positions are modified to N6-acetyllysine; alternate: Lys116 and Lys123. N6-glutaryllysine; alternate occurs at positions 116 and 123. Lys123 carries the N6-(2-hydroxyisobutyryl)lysine; alternate modification. Lys123 bears the N6-methyllysine; alternate mark. Lys123 carries the post-translational modification N6-succinyllysine; alternate.

It belongs to the histone H3 family. As to quaternary structure, the nucleosome is a histone octamer containing two molecules each of H2A, H2B, H3 and H4 assembled in one H3-H4 heterotetramer and two H2A-H2B heterodimers. The octamer wraps approximately 147 bp of DNA. During nucleosome assembly the chaperone ASF1A interacts with the histone H3-H4 heterodimer (via C-terminus of H3); this interaction is direct. Interacts with DNAJC9, CHAF1A and CHAF1B. Interacts with NASP; NASP is a histone chaperone that stabilizes and maintains a soluble pool of Histone H3-H4 dimers. Acetylation is generally linked to gene activation. Acetylation on Lys-10 (H3K9ac) impairs methylation at Arg-9 (H3R8me2s). Acetylation on Lys-19 (H3K18ac) and Lys-24 (H3K24ac) favors methylation at Arg-18 (H3R17me). Acetylation at Lys-123 (H3K122ac) by EP300/p300 plays a central role in chromatin structure: localizes at the surface of the histone octamer and stimulates transcription, possibly by promoting nucleosome instability. Post-translationally, citrullination at Arg-9 (H3R8ci) and/or Arg-18 (H3R17ci) by PADI4 impairs methylation and represses transcription. In terms of processing, asymmetric dimethylation at Arg-18 (H3R17me2a) by CARM1 is linked to gene activation. Symmetric dimethylation at Arg-9 (H3R8me2s) by PRMT5 is linked to gene repression. Asymmetric dimethylation at Arg-3 (H3R2me2a) by PRMT6 is linked to gene repression and is mutually exclusive with H3 Lys-5 methylation (H3K4me2 and H3K4me3). H3R2me2a is present at the 3' of genes regardless of their transcription state and is enriched on inactive promoters, while it is absent on active promoters. Methylation at Lys-5 (H3K4me), Lys-37 (H3K36me) and Lys-80 (H3K79me) are linked to gene activation. Methylation at Lys-5 (H3K4me) facilitates subsequent acetylation of H3 and H4. Methylation at Lys-80 (H3K79me) is associated with DNA double-strand break (DSB) responses and is a specific target for TP53BP1. Methylation at Lys-10 (H3K9me) and Lys-28 (H3K27me) are linked to gene repression. Methylation at Lys-10 (H3K9me) is a specific target for HP1 proteins (CBX1, CBX3 and CBX5) and prevents subsequent phosphorylation at Ser-11 (H3S10ph) and acetylation of H3 and H4. Methylation at Lys-5 (H3K4me) and Lys-80 (H3K79me) require preliminary monoubiquitination of H2B at 'Lys-120'. Methylation at Lys-10 (H3K9me) and Lys-28 (H3K27me) are enriched in inactive X chromosome chromatin. Monomethylation at Lys-57 (H3K56me1) by EHMT2/G9A in G1 phase promotes interaction with PCNA and is required for DNA replication. Post-translationally, phosphorylated at Thr-4 (H3T3ph) by VRK1. Phosphorylated at Thr-4 (H3T3ph) by HASPIN during prophase and dephosphorylated during anaphase. Phosphorylation at Ser-11 (H3S10ph) by AURKB is crucial for chromosome condensation and cell-cycle progression during mitosis and meiosis. In addition phosphorylation at Ser-11 (H3S10ph) by RPS6KA4 and RPS6KA5 is important during interphase because it enables the transcription of genes following external stimulation, like mitogens, stress, growth factors or UV irradiation and result in the activation of genes, such as c-fos and c-jun. Phosphorylation at Ser-11 (H3S10ph), which is linked to gene activation, prevents methylation at Lys-10 (H3K9me) but facilitates acetylation of H3 and H4. Phosphorylation at Ser-11 (H3S10ph) by AURKB mediates the dissociation of HP1 proteins (CBX1, CBX3 and CBX5) from heterochromatin. Phosphorylation at Ser-11 (H3S10ph) is also an essential regulatory mechanism for neoplastic cell transformation. Phosphorylated at Ser-29 (H3S28ph) by MAP3K20 isoform 1, RPS6KA5 or AURKB during mitosis or upon ultraviolet B irradiation. Phosphorylation at Thr-7 (H3T6ph) by PRKCB is a specific tag for epigenetic transcriptional activation that prevents demethylation of Lys-5 (H3K4me) by LSD1/KDM1A. At centromeres, specifically phosphorylated at Thr-12 (H3T11ph) from prophase to early anaphase, by DAPK3 and PKN1. Phosphorylation at Thr-12 (H3T11ph) by PKN1 or isoform M2 of PKM (PKM2) is a specific tag for epigenetic transcriptional activation that promotes demethylation of Lys-10 (H3K9me) by KDM4C/JMJD2C. Phosphorylation at Tyr-42 (H3Y41ph) by JAK2 promotes exclusion of CBX5 (HP1 alpha) from chromatin. In terms of processing, monoubiquitinated by RAG1 in lymphoid cells, monoubiquitination is required for V(D)J recombination. Ubiquitinated by the CUL4-DDB-RBX1 complex in response to ultraviolet irradiation. This may weaken the interaction between histones and DNA and facilitate DNA accessibility to repair proteins. Lysine deamination at Lys-5 (H3K4all) to form allysine is mediated by LOXL2. Allysine formation by LOXL2 only takes place on H3K4me3 and results in gene repression. Post-translationally, crotonylation (Kcr) is specifically present in male germ cells and marks testis-specific genes in post-meiotic cells, including X-linked genes that escape sex chromosome inactivation in haploid cells. Crotonylation marks active promoters and enhancers and confers resistance to transcriptional repressors. It is also associated with post-meiotically activated genes on autosomes. In terms of processing, butyrylation of histones marks active promoters and competes with histone acetylation. It is present during late spermatogenesis. Succinylation at Lys-80 (H3K79succ) by KAT2A takes place with a maximum frequency around the transcription start sites of genes. It gives a specific tag for epigenetic transcription activation. Desuccinylation at Lys-123 (H3K122succ) by SIRT7 in response to DNA damage promotes chromatin condensation and double-strand breaks (DSBs) repair. Post-translationally, serine ADP-ribosylation by PARP1 or PARP2 constitutes the primary form of ADP-ribosylation of proteins in response to DNA damage. Serine ADP-ribosylation at Ser-11 (H3S10ADPr) promotes recruitment of CHD1L. H3S10ADPr is mutually exclusive with phosphorylation at Ser-11 (H3S10ph) and impairs acetylation at Lys-10 (H3K9ac). In terms of processing, serotonylated by TGM2 at Gln-6 (H3Q5ser) during serotonergic neuron differentiation. H3Q5ser is associated with trimethylation of Lys-5 (H3K4me3) and enhances general transcription factor IID (TFIID) complex-binding to H3K4me3, thereby facilitating transcription. Dopaminylated by TGM2 at Gln-6 (H3Q5dop) in ventral tegmental area (VTA) neurons. H3Q5dop mediates neurotransmission-independent role of nuclear dopamine by regulating relapse-related transcriptional plasticity in the reward system. Post-translationally, lactylated in macrophages by EP300/P300 by using lactoyl-CoA directly derived from endogenous or exogenous lactate, leading to stimulates gene transcription.

The protein resides in the nucleus. The protein localises to the chromosome. In terms of biological role, core component of nucleosome. Nucleosomes wrap and compact DNA into chromatin, limiting DNA accessibility to the cellular machineries which require DNA as a template. Histones thereby play a central role in transcription regulation, DNA repair, DNA replication and chromosomal stability. DNA accessibility is regulated via a complex set of post-translational modifications of histones, also called histone code, and nucleosome remodeling. The chain is Histone H3.2 from Cricetulus longicaudatus (Long-tailed dwarf hamster).